Here is a 584-residue protein sequence, read N- to C-terminus: Arginine--tRNA ligase (584 aa).

The short motif at 127-137 is the 'HIGH' region element; the sequence is PNTNKPLHIGH.

This sequence belongs to the class-I aminoacyl-tRNA synthetase family. As to quaternary structure, monomer.

It localises to the cytoplasm. It catalyses the reaction tRNA(Arg) + L-arginine + ATP = L-arginyl-tRNA(Arg) + AMP + diphosphate. This is Arginine--tRNA ligase from Borrelia hermsii (strain HS1 / DAH).